A 214-amino-acid polypeptide reads, in one-letter code: Adenylate kinase (214 aa).

ATP is bound at residue 10–15; it reads GAGKGT. The interval 30–59 is NMP; that stretch reads STGDMLRAAIKAGTELGKQAKAVIDAGQLV. AMP-binding positions include threonine 31, arginine 36, 57-59, 85-88, and glutamine 92; these read QLV and GFPR. Positions 122–159 are LID; the sequence is GRRAHLPSGRTYHVVYNPPKVEGKDDVTGEDLVVRDDD. ATP contacts are provided by residues arginine 123 and 132-133; that span reads TY. Residues arginine 156 and arginine 167 each contribute to the AMP site. Lysine 200 is an ATP binding site.

This sequence belongs to the adenylate kinase family. As to quaternary structure, monomer.

It localises to the cytoplasm. The catalysed reaction is AMP + ATP = 2 ADP. It participates in purine metabolism; AMP biosynthesis via salvage pathway; AMP from ADP: step 1/1. In terms of biological role, catalyzes the reversible transfer of the terminal phosphate group between ATP and AMP. Plays an important role in cellular energy homeostasis and in adenine nucleotide metabolism. This chain is Adenylate kinase, found in Vibrio vulnificus (strain CMCP6).